A 237-amino-acid chain; its full sequence is Lectin alpha chain (237 aa).

Mn(2+) contacts are provided by glutamate 8 and aspartate 10. The Ca(2+) site is built by aspartate 10, tyrosine 12, asparagine 14, and aspartate 19. Tyrosine 12 provides a ligand contact to a carbohydrate. Mn(2+) is bound by residues aspartate 19, histidine 24, and serine 34. An a carbohydrate-binding site is contributed by 99-100; the sequence is LY. Aspartate 208 is a binding site for Ca(2+). Arginine 228 is a binding site for a carbohydrate.

It belongs to the leguminous lectin family. In terms of assembly, equilibrium between homodimer and homotetramer. Oligomerization is pH-dependent with homotetramers forming at pH 6.5 and above. The beta and gamma chains are produced by partial proteolytic processing of the lectin alpha chain by an asparaginyl endopeptidase. Mixture of 60% alpha lectin and 40% of its beta and gamma proteolytic fragments. In terms of tissue distribution, seed.

It localises to the vacuole. It is found in the aleurone grain. Functionally, D-mannose/D-glucose-binding lectin. Induces histamine release in mast cells from hamster and rat. Induces lymphocyte proliferation and IFNG production. The sequence is that of Lectin alpha chain from Macropsychanthus bicolor (Dioclea rostrata).